The following is a 422-amino-acid chain: Golgi-associated RAB2 interactor protein 2 (422 aa).

The interval 353–404 (PVESEANTSKEMKDKTSEEKMPDFQSTALKAEESRSLRTESNTSVLSPHIKS) is disordered. Residues 360–374 (TSKEMKDKTSEEKMP) are compositionally biased toward basic and acidic residues.

Belongs to the GARIN family. Interacts with CALM1. Expressed in spermatozoa (at protein level).

It is found in the cell projection. It localises to the cilium. The protein resides in the flagellum. Its function is as follows. Seems to play a role in sperm motility. The polypeptide is Golgi-associated RAB2 interactor protein 2 (Homo sapiens (Human)).